Reading from the N-terminus, the 44-residue chain is M-factor (44 aa).

The propeptide occupies 1 to 32; sequence MDSIATNTHSSSIVNAYNNNPTDVVKTQNIKN. Cysteine 41 is subject to Cysteine methyl ester. Cysteine 41 carries the S-farnesyl cysteine lipid modification. The propeptide at 42–44 is removed in mature form; that stretch reads VIA.

The protein resides in the secreted. Its function is as follows. M-factor is a mating pheromone produced by M-type mating cells. All three mfm genes contribute to the production of M-factor. This Schizosaccharomyces pombe (strain 972 / ATCC 24843) (Fission yeast) protein is M-factor (mfm2).